The sequence spans 230 residues: Carbohydrate deacetylase (230 aa).

Residues H59 and H123 each contribute to the Mg(2+) site.

The protein belongs to the YdjC deacetylase family. As to quaternary structure, homodimer. The cofactor is Mg(2+).

Its function is as follows. Probably catalyzes the deacetylation of acetylated carbohydrates an important step in the degradation of oligosaccharides. In Oceanobacillus iheyensis (strain DSM 14371 / CIP 107618 / JCM 11309 / KCTC 3954 / HTE831), this protein is Carbohydrate deacetylase.